Here is a 409-residue protein sequence, read N- to C-terminus: Broad specificity amino-acid racemase (409 aa).

The first 24 residues, 1 to 24 (MPFRRTLLAASLVLLITGQAPLYA), serve as a signal peptide directing secretion. The cysteines at positions 71 and 97 are disulfide-linked. Catalysis depends on Lys75, which acts as the Proton acceptor. Lys75 is modified (N6-(pyridoxal phosphate)lysine). Arg174 serves as a coordination point for substrate. Tyr301 functions as the Proton acceptor in the catalytic mechanism. Met349 is a substrate binding site.

The protein belongs to the alanine racemase family. Bsr subfamily. In terms of assembly, monomer. Forms a head-to-tail homodimer in the structure. Pyridoxal 5'-phosphate is required as a cofactor.

It is found in the periplasm. The catalysed reaction is an L-alpha-amino acid = a D-alpha-amino acid. The enzyme catalyses L-lysine = D-lysine. It catalyses the reaction L-arginine = D-arginine. It carries out the reaction L-alanine = D-alanine. Its activity is regulated as follows. Activity is enhanced by Co(2+), Mn(2+) and Sr(2+), and decreased by Cu(2+). In terms of biological role, amino-acid racemase that catalyzes the interconversion of L-lysine and D-lysine, and L-arginine and D-arginine. To a lesser extent, is also able to interconvert alanine and isoleucine enantiomers. The sequence is that of Broad specificity amino-acid racemase from Pseudomonas putida (Arthrobacter siderocapsulatus).